The sequence spans 187 residues: ECF RNA polymerase sigma factor SigK (187 aa).

Residues 30 to 96 (YDHTCTRVYG…RAVDRVRAEQ (67 aa)) are sigma-70 factor domain-2. Positions 53–56 (ETTQ) match the Interaction with polymerase core subunit RpoC motif. The tract at residues 133–182 (CLDGLTDTQRQCIELAYYGGLTYAEVSQRLATNLSTIKSRMRDALRGLRN) is sigma-70 factor domain-4. Residues 155-174 (YAEVSQRLATNLSTIKSRMR) constitute a DNA-binding region (H-T-H motif).

The protein belongs to the sigma-70 factor family. ECF subfamily. In terms of assembly, interacts transiently with the RNA polymerase catalytic core formed by RpoA, RpoB, RpoC and RpoZ (2 alpha, 1 beta, 1 beta' and 1 omega subunit) to form the RNA polymerase holoenzyme that can initiate transcription. Interacts (via sigma-70 factor domain 4) with anti-sigma-K factor RskA.

Its function is as follows. Sigma factors are initiation factors that promote the attachment of RNA polymerase to specific initiation sites and are then released. Extracytoplasmic function (ECF) sigma factors are held in an inactive form by an anti-sigma factor until released by regulated intramembrane proteolysis. The protein is ECF RNA polymerase sigma factor SigK (sigK) of Mycobacterium ulcerans (strain Agy99).